A 102-amino-acid polypeptide reads, in one-letter code: MQNQKIRIRLKAFDYKLIDQSALEIVETAKRTGAVVKGPVPLPTSIERFDVLRSPHVNKSSRDQFEIRTHRRLMDIMDPTDKTVDALMKLDLPAGVDVEIKL.

It belongs to the universal ribosomal protein uS10 family. In terms of assembly, part of the 30S ribosomal subunit.

Involved in the binding of tRNA to the ribosomes. The sequence is that of Small ribosomal subunit protein uS10 from Thiobacillus denitrificans (strain ATCC 25259 / T1).